The following is a 174-amino-acid chain: Balbiani ring protein 1 (174 aa).

Residues 28 to 174 (KCRCTSAGKP…RPEGCGSAMR (147 aa)) form a disordered region. 8 consecutive repeat copies span residues 42 to 52 (EPSKGSKPRPE), 53 to 63 (KPSKGSKPRPE), 64 to 74 (KPSKGSKPKPE), 75 to 85 (KPSKGSKPRPE), 124 to 134 (EPSKGSKPRPE), 135 to 145 (KPSKESKPRPE), 146 to 156 (KPSKGSKPRPE), and 157 to 167 (KPSKGSKPRPE). 4 X 11 AA tandem repeats stretches follow at residues 42–85 (EPSK…PRPE) and 124–167 (EPSK…PRPE). 2 stretches are compositionally biased toward basic and acidic residues: residues 49-100 (PRPE…EKCA) and 121-159 (RKSEPSKGSKPRPEKPSKESKPRPEKPSKGSKPRPEKPS).

In terms of tissue distribution, salivary gland.

It is found in the secreted. Its function is as follows. Used by the larvae to construct a supramolecular structure, the larval tube. This Chironomus tentans (Midge) protein is Balbiani ring protein 1 (BR1).